Reading from the N-terminus, the 270-residue chain is Acyl-[acyl-carrier-protein]--UDP-N-acetylglucosamine O-acyltransferase (270 aa).

Residues 69–72 (QDLK), histidine 121, histidine 140, and glutamine 157 contribute to the substrate site.

This sequence belongs to the transferase hexapeptide repeat family. LpxA subfamily. Homotrimer.

Its subcellular location is the cytoplasm. It carries out the reaction a (3R)-hydroxyacyl-[ACP] + UDP-N-acetyl-alpha-D-glucosamine = a UDP-3-O-[(3R)-3-hydroxyacyl]-N-acetyl-alpha-D-glucosamine + holo-[ACP]. It functions in the pathway glycolipid biosynthesis; lipid IV(A) biosynthesis; lipid IV(A) from (3R)-3-hydroxytetradecanoyl-[acyl-carrier-protein] and UDP-N-acetyl-alpha-D-glucosamine: step 1/6. Functionally, involved in the biosynthesis of lipid A, a phosphorylated glycolipid that anchors the lipopolysaccharide to the outer membrane of the cell. This Helicobacter pylori (strain ATCC 700392 / 26695) (Campylobacter pylori) protein is Acyl-[acyl-carrier-protein]--UDP-N-acetylglucosamine O-acyltransferase.